We begin with the raw amino-acid sequence, 452 residues long: Photoreceptor ankyrin repeat protein (452 aa).

ANK repeat units follow at residues 94–123 (CRLG…SPEE), 130–160 (NGRT…DVNQ), 164–193 (GGDT…GLDL), and 223–257 (RGKT…QLSQ). Disordered regions lie at residues 335 to 369 (LGTR…SPWV) and 405 to 427 (SKAS…QSLA). A compositionally biased stretch (pro residues) spans 349-362 (APPPPLVPQSPPGS). Residues 406–424 (KASSSSHQCQPKPSPSGHQ) show a composition bias toward polar residues.

It is found in the cytoplasm. It localises to the cytosol. The protein resides in the nucleus. Its function is as follows. Acts as a transcriptional repressor for CRX-activated photoreceptor gene regulation. The protein is Photoreceptor ankyrin repeat protein of Homo sapiens (Human).